Reading from the N-terminus, the 337-residue chain is uncharacterized protein (337 aa).

It belongs to the mimivirus R69 family.

This is an uncharacterized protein from Acanthamoeba polyphaga mimivirus (APMV).